The primary structure comprises 144 residues: Maximins 11/H11 (144 aa).

A signal peptide spans 1–18 (MNFKYIVAVSFLIASAYA). Positions 19 to 43 (RSEENDEQSLSQRDVLEEESLREIR) are excised as a propeptide. At Asn-70 the chain carries Asparagine amide. The propeptide occupies 74-123 (TAEDHEVMKRLEAVMRDLDSLDYPEEASERETRGFNQEEIANLFTKKEKR). An Isoleucine amide modification is found at Ile-143.

The protein belongs to the bombinin family. As to expression, expressed by the skin glands.

It is found in the secreted. Functionally, maximin-11 shows antimicrobial activity against bacteria and against the fungus C.albicans. It has little hemolytic activity. Maximin-H11 shows antimicrobial activity against bacteria and against the fungus C.albicans. Shows strong hemolytic activity. The polypeptide is Maximins 11/H11 (Bombina maxima (Giant fire-bellied toad)).